Reading from the N-terminus, the 153-residue chain is MFGISFSELLLVGLVALLVLGPERLPGAARTAGLWIGRLKRSFNAIKQEVEREIGADEIRRQLHNEHIISLEDEARKMFAQNQHPETTYEPVSPQPASVQPDAANTGHNTLGPAEPAAPKPALSLEKTAKPVDADTPVPTPPVHDSSLPPRAP.

A helical transmembrane segment spans residues 1-21; the sequence is MFGISFSELLLVGLVALLVLG. The interval 78-153 is disordered; the sequence is MFAQNQHPET…HDSSLPPRAP (76 aa).

The protein belongs to the TatB family. The Tat system comprises two distinct complexes: a TatABC complex, containing multiple copies of TatA, TatB and TatC subunits, and a separate TatA complex, containing only TatA subunits. Substrates initially bind to the TatABC complex, which probably triggers association of the separate TatA complex to form the active translocon.

It is found in the cell inner membrane. In terms of biological role, part of the twin-arginine translocation (Tat) system that transports large folded proteins containing a characteristic twin-arginine motif in their signal peptide across membranes. Together with TatC, TatB is part of a receptor directly interacting with Tat signal peptides. TatB may form an oligomeric binding site that transiently accommodates folded Tat precursor proteins before their translocation. The sequence is that of Sec-independent protein translocase protein TatB from Pseudomonas savastanoi pv. phaseolicola (strain 1448A / Race 6) (Pseudomonas syringae pv. phaseolicola (strain 1448A / Race 6)).